The following is a 154-amino-acid chain: Myoglobin (154 aa).

The Globin domain occupies 2–148 (GLSDGEWQLV…FRNDIAAKYK (147 aa)). Position 4 is a phosphoserine (Ser-4). His-65 is a nitrite binding site. His-65 contributes to the O2 binding site. Thr-68 carries the phosphothreonine modification. His-94 contacts heme b.

This sequence belongs to the globin family. In terms of assembly, monomeric.

It is found in the cytoplasm. It localises to the sarcoplasm. It carries out the reaction Fe(III)-heme b-[protein] + nitric oxide + H2O = Fe(II)-heme b-[protein] + nitrite + 2 H(+). The enzyme catalyses H2O2 + AH2 = A + 2 H2O. In terms of biological role, monomeric heme protein which primary function is to store oxygen and facilitate its diffusion within muscle tissues. Reversibly binds oxygen through a pentacoordinated heme iron and enables its timely and efficient release as needed during periods of heightened demand. Depending on the oxidative conditions of tissues and cells, and in addition to its ability to bind oxygen, it also has a nitrite reductase activity whereby it regulates the production of bioactive nitric oxide. Under stress conditions, like hypoxia and anoxia, it also protects cells against reactive oxygen species thanks to its pseudoperoxidase activity. In Lepilemur mustelinus (Weasel sportive lemur), this protein is Myoglobin (MB).